A 129-amino-acid polypeptide reads, in one-letter code: Glycine cleavage system H protein 2 (129 aa).

The 82-residue stretch at 24–105 (SVTVGISDHA…PYVSWFFKLK (82 aa)) folds into the Lipoyl-binding domain. K65 bears the N6-lipoyllysine mark.

It belongs to the GcvH family. As to quaternary structure, the glycine cleavage system is composed of four proteins: P, T, L and H. Requires (R)-lipoate as cofactor.

The glycine cleavage system catalyzes the degradation of glycine. The H protein shuttles the methylamine group of glycine from the P protein to the T protein. The sequence is that of Glycine cleavage system H protein 2 from Pseudomonas aeruginosa (strain ATCC 15692 / DSM 22644 / CIP 104116 / JCM 14847 / LMG 12228 / 1C / PRS 101 / PAO1).